The sequence spans 153 residues: uncharacterized protein (153 aa).

This is an uncharacterized protein from Escherichia coli (strain K12).